The sequence spans 408 residues: Peptidase T (408 aa).

Position 78 (His78) interacts with Zn(2+). Residue Asp80 is part of the active site. A Zn(2+)-binding site is contributed by Asp141. Catalysis depends on Glu175, which acts as the Proton acceptor. 3 residues coordinate Zn(2+): Glu176, Asp198, and His380.

It belongs to the peptidase M20B family. Requires Zn(2+) as cofactor.

Its subcellular location is the cytoplasm. It carries out the reaction Release of the N-terminal residue from a tripeptide.. Its function is as follows. Cleaves the N-terminal amino acid of tripeptides. The polypeptide is Peptidase T (Clostridium botulinum (strain 657 / Type Ba4)).